A 2028-amino-acid chain; its full sequence is Phosphatidylinositol 4-kinase alpha 1 (2028 aa).

Positions 184 to 241 (PASPKEQRQQNSANSETDTSSSQGSPISTNRYPSGKTEMASPGDEVASHGSNLSSKSS) are disordered. Polar residues predominate over residues 192–215 (QQNSANSETDTSSSQGSPISTNRY). Positions 231-241 (SHGSNLSSKSS) are enriched in low complexity. The PIK helical domain occupies 1483-1659 (TEYAKTAFSV…NAAFQEILPQ (177 aa)). The interval 1660–1773 (VRQHIIDGFS…VKPQACIFKV (114 aa)) is pleckstrin homology (PH) domain conferring phosphoinositide binding specificity. The PI3K/PI4K catalytic domain occupies 1734 to 2012 (VDSGIPLQSA…VCTDAYNKWT (279 aa)). The G-loop stretch occupies residues 1740 to 1746 (LQSAAKV). The catalytic loop stretch occupies residues 1876-1884 (QPKDRHNGN). The segment at 1895-1920 (HIDFGFILETSPGGNMRFESAHFKLS) is activation loop.

The protein belongs to the PI3/PI4-kinase family. Type III PI4K subfamily. As to quaternary structure, interacts in vitro with actin filaments via its PH domain. As to expression, present in leaves and inflorescences.

It is found in the membrane. Its subcellular location is the cytoplasm. The protein localises to the perinuclear region. It catalyses the reaction a 1,2-diacyl-sn-glycero-3-phospho-(1D-myo-inositol) + ATP = a 1,2-diacyl-sn-glycero-3-phospho-(1D-myo-inositol 4-phosphate) + ADP + H(+). Its activity is regulated as follows. Repressed by PtdIns4P, adenosine and wortmannin, but stimulated by other negatively charged lipids such as PtdIns3P, PtdOH, and phosphatidyl-serine (PtdSer). Acts on phosphatidylinositol (PtdIns) in the first committed step in the production of the second messenger inositol-1,4,5,-trisphosphate. Can bind to phosphatidylinositol 4-monophosphate (PI-4-P or PtdIns4P), phosphatidylinositol 4,5-bisphosphate (PI-4,5-P2 or PtdIns4,5P2), and phosphatidic acid (PtdOH), but not to 3-phosphoinositides. May function upstream of the cold response phosphoinositide-dependent phospholipase C (PI-PLC) pathway. The polypeptide is Phosphatidylinositol 4-kinase alpha 1 (Arabidopsis thaliana (Mouse-ear cress)).